Reading from the N-terminus, the 918-residue chain is Interleukin-6 receptor subunit beta (918 aa).

Positions 1-22 (MSALRIWLMQALLIFLTTESIG) are cleaved as a signal peptide. Over 23–618 (QLVEPCGYIY…TLKFAQGEIE (596 aa)) the chain is Extracellular. In terms of domain architecture, Ig-like C2-type spans 26–120 (EPCGYIYPEF…IEQNVYGITI (95 aa)). Intrachain disulfides connect cysteine 28–cysteine 54 and cysteine 48–cysteine 103. Asparagine 43, asparagine 61, asparagine 83, and asparagine 131 each carry an N-linked (GlcNAc...) asparagine glycan. Fibronectin type-III domains follow at residues 125–215 (PPDI…NFDP), 223–323 (PPHN…TYED), 328–418 (APSF…IPGS), 422–516 (ASHP…LKQA), and 518–612 (PSKG…TLKF). Cysteine 134 and cysteine 144 are joined by a disulfide. The N-linked (GlcNAc...) asparagine glycan is linked to asparagine 157. Cysteine 172 and cysteine 181 are oxidised to a cystine. 2 N-linked (GlcNAc...) asparagine glycosylation sites follow: asparagine 205 and asparagine 226. The short motif at 309-313 (WSDWS) is the WSXWS motif element. Residues asparagine 382 and asparagine 389 are each glycosylated (N-linked (GlcNAc...) asparagine). Cysteine 457 and cysteine 465 form a disulfide bridge. N-linked (GlcNAc...) asparagine glycans are attached at residues asparagine 477 and asparagine 552. Residues 619–640 (AIVVPVCLAFLLTTLLGVLFCF) form a helical membrane-spanning segment. Topologically, residues 641 to 918 (NKRDLIKKHI…TVRQGGYMPQ (278 aa)) are cytoplasmic. Residues 650–658 (IWPNVPDPS) carry the Box 1 motif motif. 4 disordered regions span residues 659–679 (KSHI…NSKD), 720–754 (TEGH…STAS), 773–795 (VQVF…PEDL), and 817–842 (SCSQ…GSEE). A phosphoserine mark is found at serine 660 and serine 666. Positions 730–751 (SSCMSSSRPSISSSEENESAQS) are enriched in low complexity. A compositionally biased stretch (polar residues) spans 773-785 (VQVFSRSESTQPL). Phosphoserine occurs at positions 781, 788, 828, and 838.

The protein belongs to the type I cytokine receptor family. Type 2 subfamily. In terms of assembly, component of a hexamer of two molecules each of IL6, IL6R and IL6ST; associates with the complex IL6:IL6R but does not interact with IL6. Forms heterodimers composed of LIFR and IL6ST (type I OSM receptor) which are activated by LIF and OSM. Also forms heterodimers composed of OSMR and IL6ST (type II receptor) which are activated by OSM but not by LIF. Interacts with HCK. Interacts with INPP5D/SHIP1. Interacts with SRC and YES. Interacts with ARMH4; this interaction prevents IL6ST protein homodimerization and bridges ARMH4 with IL6R and STAT3 and therefore inhibits phosphorylation of STAT3 at 'Tyr-705'. Phosphorylation of Ser-781 down-regulates cell surface expression. Post-translationally, heavily N-glycosylated. Glycosylation is required for protein stability and localization in plasma membrane but not for ligand binding. In terms of tissue distribution, found in hepatocytes, astrocytes, fibroblasts and endothelial cells.

Its subcellular location is the cell membrane. Signal-transducing molecule. The receptor systems for IL6, LIF, OSM, CNTF, IL11, CTF1 and BSF3 can utilize IL6ST for initiating signal transmission. Binding of IL6 to IL6R induces IL6ST homodimerization and formation of a high-affinity receptor complex, which activates the intracellular JAK-MAPK and JAK-STAT3 signaling pathways. That causes phosphorylation of IL6ST tyrosine residues which in turn activates STAT3. In parallel, the IL6 signaling pathway induces the expression of two cytokine receptor signaling inhibitors, SOCS1 and SOCS3, which inhibit JAK and terminate the activity of the IL6 signaling pathway as a negative feedback loop. Also activates the yes-associated protein 1 (YAP) and NOTCH pathways to control inflammation-induced epithelial regeneration, independently of STAT3. Mediates signals which regulate immune response, hematopoiesis, pain control and bone metabolism. Has a role in embryonic development. Essential for survival of motor and sensory neurons and for differentiation of astrocytes. Required for expression of TRPA1 in nociceptive neurons. Required for the maintenance of PTH1R expression in the osteoblast lineage and for the stimulation of PTH-induced osteoblast differentiation. Required for normal trabecular bone mass and cortical bone composition. This chain is Interleukin-6 receptor subunit beta, found in Rattus norvegicus (Rat).